Consider the following 115-residue polypeptide: Large ribosomal subunit protein bL19 (115 aa).

The protein belongs to the bacterial ribosomal protein bL19 family.

Functionally, this protein is located at the 30S-50S ribosomal subunit interface and may play a role in the structure and function of the aminoacyl-tRNA binding site. This Desulforapulum autotrophicum (strain ATCC 43914 / DSM 3382 / VKM B-1955 / HRM2) (Desulfobacterium autotrophicum) protein is Large ribosomal subunit protein bL19.